Reading from the N-terminus, the 398-residue chain is Argininosuccinate synthase (398 aa).

8-16 (AYSGGLDTS) provides a ligand contact to ATP. Y87 contacts L-citrulline. Position 117 (G117) interacts with ATP. L-aspartate-binding residues include T119, N123, and D124. N123 serves as a coordination point for L-citrulline. L-citrulline-binding residues include R127, S175, E259, and Y271.

It belongs to the argininosuccinate synthase family. Type 1 subfamily. Homotetramer.

Its subcellular location is the cytoplasm. It carries out the reaction L-citrulline + L-aspartate + ATP = 2-(N(omega)-L-arginino)succinate + AMP + diphosphate + H(+). It functions in the pathway amino-acid biosynthesis; L-arginine biosynthesis; L-arginine from L-ornithine and carbamoyl phosphate: step 2/3. This Corynebacterium kroppenstedtii (strain DSM 44385 / JCM 11950 / CIP 105744 / CCUG 35717) protein is Argininosuccinate synthase.